Reading from the N-terminus, the 932-residue chain is Chaperone protein ClpC3, chloroplastic (932 aa).

The tract at residues 1–20 (MERTLLNPPPSLRSPACRTT) is disordered. The N-terminal 48 residues, 1 to 48 (MERTLLNPPPSLRSPACRTTTATRIRPSSSMATMIPTPPPMRHARLVK), are a transit peptide targeting the chloroplast. Residues 99 to 240 (FDMFTDKAIK…RSEVIRMISD (142 aa)) enclose the Clp R domain. Repeat stretches follow at residues 102 to 167 (FTDK…AGRG) and 177 to 240 (FTPA…MISD). Positions 264-511 (LLEYGTNLTK…LVRLRNAQLP (248 aa)) are i. 309–316 (GEPGVGKT) is an ATP binding site. A UVR domain is found at 518 to 553 (EKKLKKIMAEKSEAIRSQDFEKAGALRGEEVELKSE). Positions 579–770 (VTEADVQHIV…LIIMTSNVGS (192 aa)) are II. Position 653–660 (653–660 (GPTGVGKS)) interacts with ATP.

The protein belongs to the ClpA/ClpB family. ClpC subfamily.

It localises to the plastid. The protein localises to the chloroplast. Its function is as follows. Molecular chaperone that may interact with a ClpP-like protease involved in degradation of denatured proteins in the chloroplast. The polypeptide is Chaperone protein ClpC3, chloroplastic (CLPC3) (Oryza sativa subsp. japonica (Rice)).